We begin with the raw amino-acid sequence, 205 residues long: GTP-binding protein yptV5 (205 aa).

Gly-15–Thr-22 serves as a coordination point for GTP. The short motif at Tyr-37–Phe-45 is the Effector region element. Residues Asp-63 to Gln-67 and Asn-125 to Asp-128 each bind GTP. Residues Cys-204 and Cys-205 are each lipidated (S-geranylgeranyl cysteine).

It belongs to the small GTPase superfamily. Rab family.

It localises to the cell membrane. Functionally, protein transport. Probably involved in vesicular traffic. This Volvox carteri (Green alga) protein is GTP-binding protein yptV5 (YPTV5).